The sequence spans 183 residues: Disulfide bond formation protein B 2 (183 aa).

Over 1–9 the chain is Cytoplasmic; sequence MSLACSRSL. The chain crosses the membrane as a helical span at residues 10 to 26; that stretch reads FFMAFTAGILALGASYY. Residues 27–44 lie on the Periplasmic side of the membrane; that stretch reads LEYAVGLVPCSLCLVQRL. Cysteines 36 and 39 form a disulfide. A helical membrane pass occupies residues 45 to 61; the sequence is FMSVLTLCCGLAAVHGP. The Cytoplasmic segment spans residues 62–68; sequence QRVGLSL. The chain crosses the membrane as a helical span at residues 69 to 85; sequence YWMVTLLSSLGGTTAAW. Topologically, residues 86-142 are periplasmic; that stretch reads RQVLFQSDSLQELAHCAPNPEEMFSSLPWLCALMRMFNDTADCAELSWTLFDLSIPE. Cys101 and Cys128 are joined by a disulfide. Residues 143 to 161 form a helical membrane-spanning segment; the sequence is WSLLFFVGMSILAVYQLLR. Topologically, residues 162 to 183 are cytoplasmic; it reads QVWMALQRPLSGQPSHPALVRD.

The protein belongs to the DsbB family.

The protein resides in the cell inner membrane. Functionally, required for disulfide bond formation in some periplasmic proteins. Acts by oxidizing the DsbA protein. This chain is Disulfide bond formation protein B 2, found in Pseudomonas fluorescens (strain Pf0-1).